We begin with the raw amino-acid sequence, 70 residues long: Cold shock-like protein CspI (70 aa).

The region spanning 7–67 (GLVKWFNPEK…GPKGPAAVHV (61 aa)) is the CSD domain.

Its subcellular location is the cytoplasm. The chain is Cold shock-like protein CspI (cspI) from Escherichia coli O6:H1 (strain CFT073 / ATCC 700928 / UPEC).